Consider the following 155-residue polypeptide: Trypsin/factor XIIA inhibitor (155 aa).

The N-terminal stretch at 1–28 is a signal peptide; that stretch reads MASSSSSSHRRLILAAAVLLSVLAAASA. 5 disulfides stabilise this stretch: Cys34-Cys83, Cys48-Cys72, Cys57-Cys114, Cys73-Cys132, and Cys85-Cys143. Arg62 is a catalytic residue. Positions 139–155 are cleaved as a propeptide — C-terminal peptide; the sequence is GVAECPWILGGGTMPSK.

This sequence belongs to the protease inhibitor I6 (cereal trypsin/alpha-amylase inhibitor) family. As to quaternary structure, monomer.

It localises to the secreted. Potent inhibitor of mammalian trypsin and a specific inhibitor of factor XIIa (activated hageman factor). The chain is Trypsin/factor XIIA inhibitor from Zea mays (Maize).